The primary structure comprises 215 residues: Cytochrome c biogenesis ATP-binding export protein CcmA (215 aa).

One can recognise an ABC transporter domain in the interval 7-209 (LKIDRLACQR…ALTVLNLAQY (203 aa)). 39 to 46 (GHNGIGKT) is a binding site for ATP.

This sequence belongs to the ABC transporter superfamily. CcmA exporter (TC 3.A.1.107) family. The complex is composed of two ATP-binding proteins (CcmA) and two transmembrane proteins (CcmB).

The protein localises to the cell inner membrane. It carries out the reaction heme b(in) + ATP + H2O = heme b(out) + ADP + phosphate + H(+). Part of the ABC transporter complex CcmAB involved in the biogenesis of c-type cytochromes; once thought to export heme, this seems not to be the case, but its exact role is uncertain. Responsible for energy coupling to the transport system. This chain is Cytochrome c biogenesis ATP-binding export protein CcmA, found in Mannheimia succiniciproducens (strain KCTC 0769BP / MBEL55E).